The sequence spans 266 residues: Putative carbamate hydrolase RutD (266 aa).

It belongs to the AB hydrolase superfamily. Hydrolase RutD family.

The catalysed reaction is carbamate + 2 H(+) = NH4(+) + CO2. In terms of biological role, involved in pyrimidine catabolism. May facilitate the hydrolysis of carbamate, a reaction that can also occur spontaneously. This Escherichia coli O103:H2 (strain 12009 / EHEC) protein is Putative carbamate hydrolase RutD.